A 181-amino-acid chain; its full sequence is Large ribosomal subunit protein uL6m (181 aa).

This sequence belongs to the universal ribosomal protein uL6 family.

It is found in the mitochondrion. The chain is Large ribosomal subunit protein uL6m (RPL6) from Acanthamoeba castellanii (Amoeba).